We begin with the raw amino-acid sequence, 75 residues long: Protein SlyX homolog (75 aa).

It belongs to the SlyX family.

This Vibrio atlanticus (strain LGP32) (Vibrio splendidus (strain Mel32)) protein is Protein SlyX homolog.